The chain runs to 154 residues: Large ribosomal subunit protein uL13 (154 aa).

This sequence belongs to the universal ribosomal protein uL13 family. In terms of assembly, part of the 50S ribosomal subunit.

In terms of biological role, this protein is one of the early assembly proteins of the 50S ribosomal subunit, although it is not seen to bind rRNA by itself. It is important during the early stages of 50S assembly. The polypeptide is Large ribosomal subunit protein uL13 (Rhizobium etli (strain CIAT 652)).